Reading from the N-terminus, the 199-residue chain is MFRLLKRACSFLLLFVIYQSFVIHHNVQRVLAYKPMVEKTLAENDTKANVDLVLAMIYTETKGGEADVMQSSESSSGQKNSITDSQASIEHGVNLLSHNLALAEEAGVDSWTAVQAYNFGTAYIDYIAEHGGQNTVDLATTYSKTVVAPSLGNTSGQTYFYYHPLALISGGKLYKNGGNIYYSREVHFNLYLIELMSLF.

The protein localises to the cell surface. This is Pneumococcal vaccine antigen A homolog (pvaA) from Streptococcus pyogenes serotype M1.